A 129-amino-acid chain; its full sequence is Small ribosomal subunit protein uS11 (129 aa).

This sequence belongs to the universal ribosomal protein uS11 family. Part of the 30S ribosomal subunit. Interacts with proteins S7 and S18. Binds to IF-3.

In terms of biological role, located on the platform of the 30S subunit, it bridges several disparate RNA helices of the 16S rRNA. Forms part of the Shine-Dalgarno cleft in the 70S ribosome. The chain is Small ribosomal subunit protein uS11 from Lacticaseibacillus casei (strain BL23) (Lactobacillus casei).